A 360-amino-acid chain; its full sequence is Sphingolipid delta(4)-desaturase (360 aa).

The next 3 helical transmembrane spans lie at alanine 67–phenylalanine 87, phenylalanine 89–histidine 109, and leucine 125–tyrosine 145. The Histidine box-1 motif lies at histidine 109–histidine 113. The Histidine box-2 signature appears at histidine 146–histidine 150. 3 helical membrane passes run valine 170–leucine 190, phenylalanine 202–glycine 222, and tryptophan 228–isoleucine 248. Positions histidine 288–histidine 292 match the Histidine box-3 motif.

The protein belongs to the fatty acid desaturase type 1 family. DEGS subfamily.

The protein localises to the membrane. The catalysed reaction is an N-acylsphinganine + 2 Fe(II)-[cytochrome b5] + O2 + 2 H(+) = an N-acylsphing-4-enine + 2 Fe(III)-[cytochrome b5] + 2 H2O. It participates in lipid metabolism; sphingolipid metabolism. Functionally, delta(4)-fatty-acid desaturase which introduces a double bond at the 4-position in the long-chain base (LCB) of ceramides. Required for the formation of the monounsaturated sphingoid base (E)-sphing-4-enine during glucosylceramide (GluCer) biosynthesis. The sequence is that of Sphingolipid delta(4)-desaturase from Komagataella phaffii (strain GS115 / ATCC 20864) (Yeast).